Reading from the N-terminus, the 271-residue chain is Putative phosphoenolpyruvate synthase regulatory protein (271 aa).

Gly152–Thr159 provides a ligand contact to ADP.

Belongs to the pyruvate, phosphate/water dikinase regulatory protein family. PSRP subfamily.

The enzyme catalyses [pyruvate, water dikinase] + ADP = [pyruvate, water dikinase]-phosphate + AMP + H(+). It carries out the reaction [pyruvate, water dikinase]-phosphate + phosphate + H(+) = [pyruvate, water dikinase] + diphosphate. In terms of biological role, bifunctional serine/threonine kinase and phosphorylase involved in the regulation of the phosphoenolpyruvate synthase (PEPS) by catalyzing its phosphorylation/dephosphorylation. The protein is Putative phosphoenolpyruvate synthase regulatory protein of Legionella pneumophila (strain Paris).